The chain runs to 633 residues: Uracil permease (633 aa).

Helical transmembrane passes span 143-163 (WWQC…FVVL), 173-193 (LSFP…WPVI), 197-217 (VMAI…VSLM), 242-262 (YEFM…LVPP), 268-288 (LFTV…IWAI), 310-330 (FSWA…TMVI), 350-370 (LVCI…VTAA), 400-420 (AGVF…NISA), 442-462 (GSLF…MATS), 465-485 (FTMA…VVCS), 521-541 (ALAA…AEVG), and 559-579 (YWVG…FFPV).

Belongs to the purine-cytosine permease (2.A.39) family. In terms of processing, glycosylated (possible); but there is not yet direct biochemical evidence for it.

It localises to the membrane. Functionally, transport of uracil. The sequence is that of Uracil permease (FUR4) from Saccharomyces cerevisiae (strain ATCC 204508 / S288c) (Baker's yeast).